Here is a 292-residue protein sequence, read N- to C-terminus: Insulin-like growth factor-binding protein 3 (292 aa).

An N-terminal signal peptide occupies residues 1–27; that stretch reads MHPARPALWAAALTALTLLRGPPVARA. The 84-residue stretch at 36–119 folds into the IGFBP N-terminal domain; it reads PVVRCEPCDA…LNGRGFCANA (84 aa). 6 disulfides stabilise this stretch: C40–C69, C43–C71, C51–C72, C60–C75, C83–C96, and C90–C116. 3 N-linked (GlcNAc...) asparagine glycosylation sites follow: N118, N124, and N137. 2 disordered regions span residues 127–161 and 191–211; these read AYLPSQPSPGNTTESEEDHNAGSVESQVVPSTHRV and YESQSTDTQNFSSESKRETEY. The segment covering 129 to 139 has biased composition (polar residues); sequence LPSQPSPGNTT. Position 149 is a phosphoserine (S149). Over residues 192-203 the composition is skewed to polar residues; sequence ESQSTDTQNFSS. A glycan (N-linked (GlcNAc...) asparagine) is linked at N200. At S202 the chain carries Phosphoserine. Positions 211-286 constitute a Thyroglobulin type-1 domain; that stretch reads YGPCRREMED…DTKGKDDVHC (76 aa). 3 disulfides stabilise this stretch: C214/C241, C252/C263, and C265/C286.

As to quaternary structure, interacts with XLKD1. Binds IGF2 more than IGF1. Forms a ternary complex of about 140 to 150 kDa with IGF1 or IGF2 and a 85 kDa glycoprotein (ALS). Interacts with humanin; humanin competes with importin KPNB1 for binding to IGFBP3, blocking IGFBP3 nuclear import and IGFBP3-mediated apoptosis. Interacts with TMEM219. Interacts with RXRA; this interaction modulates the transcriptional activity of RXRA. Interacts with LRP1; this interaction mediates cell growth inhibition independent of IGF1. Post-translationally, phosphorylated by FAM20C in the extracellular medium. Phosphorylated by CK2; resulting in decreased nuclear localization.

The protein localises to the secreted. The protein resides in the nucleus. In terms of biological role, multifunctional protein that plays a critical role in regulating the availability of IGFs such as IGF1 and IGF2 to their receptors and thereby regulates IGF-mediated cellular processes including proliferation, differentiation, and apoptosis in a cell-type specific manner. Also exhibits IGF-independent antiproliferative and apoptotic effects mediated by its receptor TMEM219/IGFBP-3R. Inhibits the positive effect of humanin on insulin sensitivity. Promotes testicular germ cell apoptosis. Acts via LRP-1/alpha2M receptor, also known as TGF-beta type V receptor, to mediate cell growth inhibition independent of IGF1. Mechanistically, induces serine-specific dephosphorylation of IRS1 or IRS2 upon ligation to its receptor, leading to the inhibitory cascade. In the nucleus, interacts with transcription factors such as retinoid X receptor-alpha/RXRA to regulate transcriptional signaling and apoptosis. The sequence is that of Insulin-like growth factor-binding protein 3 (Igfbp3) from Rattus norvegicus (Rat).